We begin with the raw amino-acid sequence, 231 residues long: Ribonuclease 3 (231 aa).

The region spanning I7–G135 is the RNase III domain. Position 48 (E48) interacts with Mg(2+). D52 is a catalytic residue. 2 residues coordinate Mg(2+): N121 and E124. E124 is a catalytic residue. Residues N160–N229 form the DRBM domain.

It belongs to the ribonuclease III family. Homodimer. The cofactor is Mg(2+).

It localises to the cytoplasm. It carries out the reaction Endonucleolytic cleavage to 5'-phosphomonoester.. Digests double-stranded RNA. Involved in the processing of primary rRNA transcript to yield the immediate precursors to the large and small rRNAs (23S and 16S). Processes some mRNAs, and tRNAs when they are encoded in the rRNA operon. Processes pre-crRNA and tracrRNA of type II CRISPR loci if present in the organism. This is Ribonuclease 3 from Chlamydia trachomatis serovar L2 (strain ATCC VR-902B / DSM 19102 / 434/Bu).